The following is a 106-amino-acid chain: Small ribosomal subunit protein uS10 (106 aa).

This sequence belongs to the universal ribosomal protein uS10 family. As to quaternary structure, part of the 30S ribosomal subunit.

Involved in the binding of tRNA to the ribosomes. The polypeptide is Small ribosomal subunit protein uS10 (Synechococcus sp. (strain RCC307)).